Reading from the N-terminus, the 228-residue chain is MPTLILVRHGQSQWNLENRFTGWWDVDLTEKGVEEAKAAGTLLKEKGVLPTVAFTSFQTRAIKTLHLALEEADRLWIPETKDWRLNERHYGGLTGLDKQEMRDKHGDEQVHIWRRSFDVPPPDMEPGHQYDPGADPRYDGIDVPTTESLKLTIERVLPYWESEILPVLASGETVIISAHGNSLRALVKHLSGISDEDITGLEIPTGQPIIYQFDDRMQPGERYYLKDS.

Substrate-binding positions include R8–N15, T21–G22, R60, E87–Y90, K98, R114–R115, and G180–N181. H9 (tele-phosphohistidine intermediate) is an active-site residue. E87 (proton donor/acceptor) is an active-site residue.

It belongs to the phosphoglycerate mutase family. BPG-dependent PGAM subfamily. Homodimer.

The enzyme catalyses (2R)-2-phosphoglycerate = (2R)-3-phosphoglycerate. The protein operates within carbohydrate degradation; glycolysis; pyruvate from D-glyceraldehyde 3-phosphate: step 3/5. Its function is as follows. Catalyzes the interconversion of 2-phosphoglycerate and 3-phosphoglycerate. The polypeptide is 2,3-bisphosphoglycerate-dependent phosphoglycerate mutase (Erythrobacter litoralis (strain HTCC2594)).